Consider the following 232-residue polypeptide: Large ribosomal subunit protein uL1 (232 aa).

Belongs to the universal ribosomal protein uL1 family. In terms of assembly, part of the 50S ribosomal subunit.

Functionally, binds directly to 23S rRNA. The L1 stalk is quite mobile in the ribosome, and is involved in E site tRNA release. Protein L1 is also a translational repressor protein, it controls the translation of the L11 operon by binding to its mRNA. This chain is Large ribosomal subunit protein uL1, found in Cutibacterium acnes (strain DSM 16379 / KPA171202) (Propionibacterium acnes).